We begin with the raw amino-acid sequence, 490 residues long: Cytochrome P450 2C14 (490 aa).

Cys-435 contributes to the heme binding site.

The protein belongs to the cytochrome P450 family. Requires heme as cofactor.

The protein resides in the endoplasmic reticulum membrane. Its subcellular location is the microsome membrane. It catalyses the reaction an organic molecule + reduced [NADPH--hemoprotein reductase] + O2 = an alcohol + oxidized [NADPH--hemoprotein reductase] + H2O + H(+). Functionally, cytochromes P450 are a group of heme-thiolate monooxygenases. In liver microsomes, this enzyme is involved in an NADPH-dependent electron transport pathway. It oxidizes a variety of structurally unrelated compounds, including steroids, fatty acids, and xenobiotics. This is Cytochrome P450 2C14 (CYP2C14) from Oryctolagus cuniculus (Rabbit).